Reading from the N-terminus, the 352-residue chain is Peptide chain release factor 1 (352 aa).

At Q233 the chain carries N5-methylglutamine. The segment at 288–309 (NAKDRKEQVGSGDRSERIRTYN) is disordered. The segment covering 289 to 306 (AKDRKEQVGSGDRSERIR) has biased composition (basic and acidic residues).

The protein belongs to the prokaryotic/mitochondrial release factor family. Post-translationally, methylated by PrmC. Methylation increases the termination efficiency of RF1.

It is found in the cytoplasm. Functionally, peptide chain release factor 1 directs the termination of translation in response to the peptide chain termination codons UAG and UAA. The protein is Peptide chain release factor 1 (prfA) of Helicobacter pylori (strain ATCC 700392 / 26695) (Campylobacter pylori).